A 165-amino-acid polypeptide reads, in one-letter code: Large ribosomal subunit protein uL10 (165 aa).

The protein belongs to the universal ribosomal protein uL10 family. Part of the ribosomal stalk of the 50S ribosomal subunit. The N-terminus interacts with L11 and the large rRNA to form the base of the stalk. The C-terminus forms an elongated spine to which L12 dimers bind in a sequential fashion forming a multimeric L10(L12)X complex.

Its function is as follows. Forms part of the ribosomal stalk, playing a central role in the interaction of the ribosome with GTP-bound translation factors. In Shewanella halifaxensis (strain HAW-EB4), this protein is Large ribosomal subunit protein uL10.